Consider the following 112-residue polypeptide: Photosystem II reaction center Psb28 protein (112 aa).

The protein belongs to the Psb28 family. Part of the photosystem II complex.

It localises to the cellular thylakoid membrane. This Microcystis aeruginosa (strain NIES-843 / IAM M-2473) protein is Photosystem II reaction center Psb28 protein.